The primary structure comprises 79 residues: Defensin-like protein 54 (79 aa).

Residues 1 to 27 form the signal peptide; that stretch reads MGIKKTSATVFLVIILTISFSYYDVEA. Intrachain disulfides connect Cys39/Cys76, Cys43/Cys67, Cys52/Cys74, and Cys56/Cys75.

This sequence belongs to the DEFL family.

The protein localises to the secreted. The protein is Defensin-like protein 54 of Arabidopsis thaliana (Mouse-ear cress).